We begin with the raw amino-acid sequence, 154 residues long: Transcriptional repressor NrdR (154 aa).

A zinc finger lies at 3–34; that stretch reads CPTCQYNGTRVVDSRPADDGNSIRRRRECEKC. The 91-residue stretch at 49-139 folds into the ATP-cone domain; the sequence is LIVVKKDGAR…VYRQFKDISV (91 aa).

The protein belongs to the NrdR family. It depends on Zn(2+) as a cofactor.

Functionally, negatively regulates transcription of bacterial ribonucleotide reductase nrd genes and operons by binding to NrdR-boxes. The polypeptide is Transcriptional repressor NrdR (Listeria monocytogenes serotype 4a (strain HCC23)).